The following is a 465-amino-acid chain: Ribulose bisphosphate carboxylase large chain (465 aa).

Lys-4 is modified (N6,N6,N6-trimethyllysine). Substrate is bound at residue Thr-163. Lys-165 functions as the Proton acceptor in the catalytic mechanism. Lys-167 lines the substrate pocket. Mg(2+) contacts are provided by Lys-191, Asp-193, and Glu-194. Lys-191 is subject to N6-carboxylysine. The active-site Proton acceptor is His-284. The substrate site is built by Arg-285, His-317, and Ser-369.

It belongs to the RuBisCO large chain family. Type I subfamily. Heterohexadecamer of 8 large chains and 8 small chains; disulfide-linked. The disulfide link is formed within the large subunit homodimers. Requires Mg(2+) as cofactor. The disulfide bond which can form in the large chain dimeric partners within the hexadecamer appears to be associated with oxidative stress and protein turnover.

The protein resides in the plastid. The protein localises to the chloroplast. The catalysed reaction is 2 (2R)-3-phosphoglycerate + 2 H(+) = D-ribulose 1,5-bisphosphate + CO2 + H2O. The enzyme catalyses D-ribulose 1,5-bisphosphate + O2 = 2-phosphoglycolate + (2R)-3-phosphoglycerate + 2 H(+). In terms of biological role, ruBisCO catalyzes two reactions: the carboxylation of D-ribulose 1,5-bisphosphate, the primary event in carbon dioxide fixation, as well as the oxidative fragmentation of the pentose substrate in the photorespiration process. Both reactions occur simultaneously and in competition at the same active site. The protein is Ribulose bisphosphate carboxylase large chain of Trochodendron aralioides (Wheel tree).